Reading from the N-terminus, the 214-residue chain is Large ribosomal subunit protein uL3 (214 aa).

At Gln-153 the chain carries N5-methylglutamine.

Belongs to the universal ribosomal protein uL3 family. As to quaternary structure, part of the 50S ribosomal subunit. Forms a cluster with proteins L14 and L19. Methylated by PrmB.

In terms of biological role, one of the primary rRNA binding proteins, it binds directly near the 3'-end of the 23S rRNA, where it nucleates assembly of the 50S subunit. The chain is Large ribosomal subunit protein uL3 from Methylobacillus flagellatus (strain ATCC 51484 / DSM 6875 / VKM B-1610 / KT).